The following is a 342-amino-acid chain: Ribosomal RNA small subunit methyltransferase C (342 aa).

It belongs to the methyltransferase superfamily. RsmC family. In terms of assembly, monomer.

It localises to the cytoplasm. It catalyses the reaction guanosine(1207) in 16S rRNA + S-adenosyl-L-methionine = N(2)-methylguanosine(1207) in 16S rRNA + S-adenosyl-L-homocysteine + H(+). Its function is as follows. Specifically methylates the guanine in position 1207 of 16S rRNA in the 30S particle. This is Ribosomal RNA small subunit methyltransferase C from Salmonella gallinarum (strain 287/91 / NCTC 13346).